Here is a 272-residue protein sequence, read N- to C-terminus: Putative hydro-lyase BBta_2883 (272 aa).

It belongs to the D-glutamate cyclase family.

The polypeptide is Putative hydro-lyase BBta_2883 (Bradyrhizobium sp. (strain BTAi1 / ATCC BAA-1182)).